Consider the following 362-residue polypeptide: UDP-N-acetylglucosamine--N-acetylmuramyl-(pentapeptide) pyrophosphoryl-undecaprenol N-acetylglucosamine transferase (362 aa).

UDP-N-acetyl-alpha-D-glucosamine is bound by residues 15–17 (TGG), asparagine 127, arginine 165, serine 191, isoleucine 247, 266–271 (ALTVSE), and glutamine 292.

Belongs to the glycosyltransferase 28 family. MurG subfamily.

The protein localises to the cell inner membrane. The enzyme catalyses di-trans,octa-cis-undecaprenyl diphospho-N-acetyl-alpha-D-muramoyl-L-alanyl-D-glutamyl-meso-2,6-diaminopimeloyl-D-alanyl-D-alanine + UDP-N-acetyl-alpha-D-glucosamine = di-trans,octa-cis-undecaprenyl diphospho-[N-acetyl-alpha-D-glucosaminyl-(1-&gt;4)]-N-acetyl-alpha-D-muramoyl-L-alanyl-D-glutamyl-meso-2,6-diaminopimeloyl-D-alanyl-D-alanine + UDP + H(+). It participates in cell wall biogenesis; peptidoglycan biosynthesis. Functionally, cell wall formation. Catalyzes the transfer of a GlcNAc subunit on undecaprenyl-pyrophosphoryl-MurNAc-pentapeptide (lipid intermediate I) to form undecaprenyl-pyrophosphoryl-MurNAc-(pentapeptide)GlcNAc (lipid intermediate II). The polypeptide is UDP-N-acetylglucosamine--N-acetylmuramyl-(pentapeptide) pyrophosphoryl-undecaprenol N-acetylglucosamine transferase (Shewanella baltica (strain OS223)).